The primary structure comprises 366 residues: MTVRNIASICNMGTNASALEKDIGPEQFPINEHYFGLVNFGNTCYCNSVLQALYFCRPFRENVLAYKAQQKKKENLLTCLADLFHSIATQKKKVGVIPPKKFISRLRKENDLFDNYMQQDAHEFLNYLLNTIADILQEEKKQEKQNGKLKNGNMNEPAENNKPELTWVHEIFQGTLTNETRCLNCETVSSKDEDFLDLSVDVEQNTSITHCLRDFSNTETLCSEQKYYCETCCSKQEAQKRMRVKKLPMILALHLKRFKYMEQLHRYTKLSYRVVFPLELRLFNTSSDAVNLDRMYDLVAVVVHCGSGPNRGHYITIVKSHGFWLLFDDDIVEKIDAQAIEEFYGLTSDISKNSESGYILFYQSRE.

Residues F35 to R365 enclose the USP domain. The active-site Nucleophile is C44. Zn(2+)-binding residues include C182, C185, C229, and C232. Catalysis depends on H313, which acts as the Proton acceptor.

It belongs to the peptidase C19 family. USP12/USP46 subfamily. In terms of assembly, interacts with WDR48. Interacts with WDR20. Interacts with DMWD. Component of the USP46/WDR20/WDR48 deubiquitinating complex. Broadly expressed.

The protein localises to the cytoplasm. It carries out the reaction Thiol-dependent hydrolysis of ester, thioester, amide, peptide and isopeptide bonds formed by the C-terminal Gly of ubiquitin (a 76-residue protein attached to proteins as an intracellular targeting signal).. With respect to regulation, activated by interaction with WDR48. Its function is as follows. Deubiquitinating enzyme that plays a role in behavior, possibly by regulating GABA action. May act by mediating the deubiquitination of GAD1/GAD67. Has almost no deubiquitinating activity by itself and requires the interaction with WDR48 to have a high activity. Not involved in deubiquitination of monoubiquitinated FANCD2. This is Ubiquitin carboxyl-terminal hydrolase 46 (USP46) from Homo sapiens (Human).